Here is a 1300-residue protein sequence, read N- to C-terminus: uncharacterized protein (1300 aa).

The N-terminal stretch at 1-26 (MGYKLKRWPLVAFTFTGIGLGVVLAA) is a signal peptide. C27 is lipidated: N-palmitoyl cysteine. The S-diacylglycerol cysteine moiety is linked to residue C27. Positions 464 to 478 (AMAAASTGADSSSGT) are enriched in low complexity. 4 disordered regions span residues 464–487 (AMAA…SGGN), 620–639 (ASVS…DTQE), 774–797 (DSQK…NDKK), and 1244–1269 (KMSD…SPRT). Composition is skewed to polar residues over residues 620-637 (ASVS…STDT) and 774-783 (DSQKSTNTVK). Over residues 785–797 (PDIKPTRENNDKK) the composition is skewed to basic and acidic residues. The segment covering 1257-1269 (TIRKPKPHHSPRT) has biased composition (basic residues).

The protein belongs to the MG307/MG309/MG338 family.

It is found in the cell membrane. This is an uncharacterized protein from Mycoplasma pneumoniae (strain ATCC 29342 / M129 / Subtype 1) (Mycoplasmoides pneumoniae).